Here is an 89-residue protein sequence, read N- to C-terminus: Acyl carrier protein MbtL (89 aa).

Residues 8-83 (NHVSAELLGI…DLQAAIAAEP (76 aa)) enclose the Carrier domain. An O-(pantetheine 4'-phosphoryl)serine modification is found at S43.

4'-phosphopantetheine is transferred from CoA to a specific serine of apo-ACP, leading to the activated holo-ACP form.

It localises to the cytoplasm. It participates in siderophore biosynthesis; mycobactin biosynthesis. In terms of biological role, acyl carrier protein involved in the formation of acyl-S-ACP intermediates within the mycobactin biosynthesis process. In Mycolicibacterium paratuberculosis (strain ATCC BAA-968 / K-10) (Mycobacterium paratuberculosis), this protein is Acyl carrier protein MbtL (mbtL).